The sequence spans 229 residues: CRISPR pre-crRNA endoribonuclease Cas5d (229 aa).

The protein belongs to the CRISPR-associated protein Cas5 family. Subtype I-C/Dvulg subfamily. It depends on Does not require a metal cofactor. as a cofactor.

CRISPR (clustered regularly interspaced short palindromic repeat) is an adaptive immune system that provides protection against mobile genetic elements (viruses, transposable elements and conjugative plasmids). CRISPR clusters contain spacers, sequences complementary to antecedent mobile elements, and target invading nucleic acids. CRISPR clusters are transcribed and processed into CRISPR RNA (crRNA). This protein is a sequence-specific endonuclease that cleaves pre-crRNA into mature crRNA, possibly by an intramolecular attack of the 2'-hydroxyl group of G26 on the scissile phosphodiester, cutting the precursor 3' to G26 residue yielding 5'-hydroxyl and 2' and/or 3' ends lacking a hydroxyl group (perhaps a 2'/3' cyclic phosphodiester). Requires between 4 and 8 nt downstream of the cleavage site for both binding and cleavage of pre-crRNA. Substitution with dG at this position abolishes cleavage but not RNA binding. Does not cleave pre-crRNA associated with the M.succiniciproducens strain MBEL55E Cas5 protein (AC Q65TW5) CRISPR locus. The protein is CRISPR pre-crRNA endoribonuclease Cas5d of Thermus thermophilus (strain ATCC BAA-163 / DSM 7039 / HB27).